A 195-amino-acid polypeptide reads, in one-letter code: Putative nucleotidase BH1399 (195 aa).

The protein belongs to the 5'(3')-deoxyribonucleotidase family.

This chain is Putative nucleotidase BH1399, found in Halalkalibacterium halodurans (strain ATCC BAA-125 / DSM 18197 / FERM 7344 / JCM 9153 / C-125) (Bacillus halodurans).